The primary structure comprises 92 residues: YcgL domain-containing protein HS_0805 (92 aa).

The 85-residue stretch at 1–85 folds into the YcgL domain; sequence MLCAIYKTKR…QQENLLEQER (85 aa).

The protein is YcgL domain-containing protein HS_0805 of Histophilus somni (strain 129Pt) (Haemophilus somnus).